The chain runs to 141 residues: Hemoglobin subunit alpha (141 aa).

One can recognise a Globin domain in the interval 1–141 (VLSSKDKANV…VSTVLTSKYR (141 aa)). Residue S3 is modified to Phosphoserine. N6-succinyllysine occurs at positions 7 and 11. The residue at position 16 (K16) is an N6-acetyllysine; alternate. Position 16 is an N6-succinyllysine; alternate (K16). The residue at position 24 (Y24) is a Phosphotyrosine. K40 carries the post-translational modification N6-succinyllysine. S49 carries the phosphoserine modification. H58 is a binding site for O2. H87 contacts heme b. S102 carries the phosphoserine modification. A Phosphothreonine modification is found at T108. Position 124 is a phosphoserine (S124). A phosphothreonine mark is found at T134 and T137. A Phosphoserine modification is found at S138.

Belongs to the globin family. In terms of assembly, heterotetramer of two alpha chains and two beta chains. In terms of tissue distribution, red blood cells.

Its function is as follows. Involved in oxygen transport from the lung to the various peripheral tissues. Hemopressin acts as an antagonist peptide of the cannabinoid receptor CNR1. Hemopressin-binding efficiently blocks cannabinoid receptor CNR1 and subsequent signaling. This is Hemoglobin subunit alpha (HBA) from Lama vicugna (Vicugna).